A 140-amino-acid chain; its full sequence is Putative 6-pyruvoyl tetrahydrobiopterin synthase (140 aa).

His-19 serves as a coordination point for Zn(2+). The active-site Proton acceptor is the Cys-38. 2 residues coordinate Zn(2+): His-44 and His-46. Active-site charge relay system residues include His-84 and Glu-129.

It belongs to the PTPS family. Homohexamer formed of two homotrimers in a head to head fashion. The cofactor is Zn(2+).

The catalysed reaction is 7,8-dihydroneopterin 3'-triphosphate = 6-pyruvoyl-5,6,7,8-tetrahydropterin + triphosphate + H(+). The protein operates within cofactor biosynthesis; tetrahydrobiopterin biosynthesis; tetrahydrobiopterin from 7,8-dihydroneopterin triphosphate: step 1/3. Its function is as follows. Involved in the biosynthesis of tetrahydrobiopterin, an essential cofactor of aromatic amino acid hydroxylases. Catalyzes the transformation of 7,8-dihydroneopterin triphosphate into 6-pyruvoyl tetrahydropterin. The polypeptide is Putative 6-pyruvoyl tetrahydrobiopterin synthase (ptps-1) (Caenorhabditis elegans).